We begin with the raw amino-acid sequence, 405 residues long: Probable tRNA sulfurtransferase (405 aa).

Residues 60–165 (VPVAESLKQI…EEAAYLSYEN (106 aa)) enclose the THUMP domain. ATP-binding positions include 183 to 184 (ML), 208 to 209 (HF), R265, G287, and Q296.

It belongs to the ThiI family.

The protein resides in the cytoplasm. It catalyses the reaction [ThiI sulfur-carrier protein]-S-sulfanyl-L-cysteine + a uridine in tRNA + 2 reduced [2Fe-2S]-[ferredoxin] + ATP + H(+) = [ThiI sulfur-carrier protein]-L-cysteine + a 4-thiouridine in tRNA + 2 oxidized [2Fe-2S]-[ferredoxin] + AMP + diphosphate. It carries out the reaction [ThiS sulfur-carrier protein]-C-terminal Gly-Gly-AMP + S-sulfanyl-L-cysteinyl-[cysteine desulfurase] + AH2 = [ThiS sulfur-carrier protein]-C-terminal-Gly-aminoethanethioate + L-cysteinyl-[cysteine desulfurase] + A + AMP + 2 H(+). It participates in cofactor biosynthesis; thiamine diphosphate biosynthesis. Catalyzes the ATP-dependent transfer of a sulfur to tRNA to produce 4-thiouridine in position 8 of tRNAs, which functions as a near-UV photosensor. Also catalyzes the transfer of sulfur to the sulfur carrier protein ThiS, forming ThiS-thiocarboxylate. This is a step in the synthesis of thiazole, in the thiamine biosynthesis pathway. The sulfur is donated as persulfide by IscS. This chain is Probable tRNA sulfurtransferase, found in Streptococcus mutans serotype c (strain ATCC 700610 / UA159).